We begin with the raw amino-acid sequence, 161 residues long: Lipoprotein signal peptidase (161 aa).

The next 3 helical transmembrane spans lie at 9–29 (WLWL…LVVE), 64–84 (WQKY…ANVL), and 96–113 (MAYA…IDRA). Catalysis depends on residues Asp120 and Asp138. The helical transmembrane segment at 133-153 (VFNIADVAIVMGAGLLILETF) threads the bilayer.

This sequence belongs to the peptidase A8 family.

The protein resides in the cell inner membrane. The catalysed reaction is Release of signal peptides from bacterial membrane prolipoproteins. Hydrolyzes -Xaa-Yaa-Zaa-|-(S,diacylglyceryl)Cys-, in which Xaa is hydrophobic (preferably Leu), and Yaa (Ala or Ser) and Zaa (Gly or Ala) have small, neutral side chains.. The protein operates within protein modification; lipoprotein biosynthesis (signal peptide cleavage). In terms of biological role, this protein specifically catalyzes the removal of signal peptides from prolipoproteins. The sequence is that of Lipoprotein signal peptidase from Haemophilus ducreyi (strain 35000HP / ATCC 700724).